A 564-amino-acid chain; its full sequence is Putative zinc metalloproteinase in scaA 5'region (564 aa).

A Peptidase M13 domain is found at 1–564 (MTRLQDDFYD…KEADFSAEEF (564 aa)). Residue H478 coordinates Zn(2+). Residue E479 is part of the active site. Residues H482 and E538 each contribute to the Zn(2+) site. D542 functions as the Proton donor in the catalytic mechanism.

It belongs to the peptidase M13 family. The cofactor is Zn(2+).

This is Putative zinc metalloproteinase in scaA 5'region from Streptococcus gordonii (strain Challis / ATCC 35105 / BCRC 15272 / CH1 / DL1 / V288).